The chain runs to 211 residues: MAPSRNGMILKPHFHKDWQRRVATWFNQPARKIRRRKARQAKARRIAPRPASGPLRPVVRCPTVRYHTKVRAGRGFSLEELRVAGIHKKVARTIGISVDPRRRNKCTESLQANVQRLKEYRSKLILFPRKPSAPKKGDSSAEELKLATQLTGPVMPIRNVYKKEKARVITEEEKNFKAFASLRMARANARLFGIRAKRAKEAAEQDVEKKK.

Lysine 16 carries the N6-acetyllysine modification. Serine 52 and serine 77 each carry phosphoserine. Glycyl lysine isopeptide (Lys-Gly) (interchain with G-Cter in SUMO2) cross-links involve residues lysine 123 and lysine 145. Residue lysine 174 forms a Glycyl lysine isopeptide (Lys-Gly) (interchain with G-Cter in SUMO1); alternate linkage. Residues lysine 174 and lysine 177 each participate in a glycyl lysine isopeptide (Lys-Gly) (interchain with G-Cter in SUMO2); alternate cross-link. Lysine 177 carries the post-translational modification N6-acetyllysine; alternate.

This sequence belongs to the eukaryotic ribosomal protein eL13 family. In terms of assembly, component of the 60S large ribosomal subunit (LSU).

Its subcellular location is the cytoplasm. Its function is as follows. Component of the ribosome, a large ribonucleoprotein complex responsible for the synthesis of proteins in the cell. The small ribosomal subunit (SSU) binds messenger RNAs (mRNAs) and translates the encoded message by selecting cognate aminoacyl-transfer RNA (tRNA) molecules. The large subunit (LSU) contains the ribosomal catalytic site termed the peptidyl transferase center (PTC), which catalyzes the formation of peptide bonds, thereby polymerizing the amino acids delivered by tRNAs into a polypeptide chain. The nascent polypeptides leave the ribosome through a tunnel in the LSU and interact with protein factors that function in enzymatic processing, targeting, and the membrane insertion of nascent chains at the exit of the ribosomal tunnel. As part of the LSU, it is probably required for its formation and the maturation of rRNAs. Plays a role in bone development. The chain is Large ribosomal subunit protein eL13 (RPL13) from Bos taurus (Bovine).